The primary structure comprises 507 residues: MVPIRADEIRNLIRERIEQYNREVKIVNTGTVLQVGDGIARIYGLNEVMAGELVEFEEGTIGIALNLESNNVGVVLMGAGLMIQEGSSVKATGRIVQIPVSEAYLGRVINALAKPIDGRGGISASESRLIESPAPGIISRRSVYEPLQTGLIAIDSMIPIGRGQRELIIGDRQTGKTAVATDTILNQQGKNVICVYVAIGQKASSVAQVVTTFQEKGAMEYTIVVAETAASPATLQYLAPYTGAALAEFFMYRERHTLIIYDDLSKQAQAYRQMSLLLRRPPGREAYPGDVFYLHSRLLERAAKSSSSLGEGSMTALPIVETQSGDVSAYIPTNVISITDGQIFLSADLFNSGIRPAINVGISVSRVGSAAQIKAMKQVAGKSKLDLAQFTELEAFAQFATDLDKTTQSQLARGRRLRELLKQSQADPLAVEEQIMTVYTGINGYLDSLEIGQVRKFLEDLRKYLKGNKPKFQEIISSTKTFTEEAEALLKEAIQEQTELFILKEQG.

An ATP-binding site is contributed by 170-177 (GDRQTGKT).

The protein belongs to the ATPase alpha/beta chains family. F-type ATPases have 2 components, CF(1) - the catalytic core - and CF(0) - the membrane proton channel. CF(1) has five subunits: alpha(3), beta(3), gamma(1), delta(1), epsilon(1). CF(0) has four main subunits: a, b, b' and c.

Its subcellular location is the plastid. It is found in the chloroplast thylakoid membrane. It carries out the reaction ATP + H2O + 4 H(+)(in) = ADP + phosphate + 5 H(+)(out). Functionally, produces ATP from ADP in the presence of a proton gradient across the membrane. The alpha chain is a regulatory subunit. The protein is ATP synthase subunit alpha, chloroplastic of Pelargonium hortorum (Common geranium).